The sequence spans 187 residues: Ribosome-recycling factor (187 aa).

This sequence belongs to the RRF family.

Its subcellular location is the cytoplasm. Its function is as follows. Responsible for the release of ribosomes from messenger RNA at the termination of protein biosynthesis. May increase the efficiency of translation by recycling ribosomes from one round of translation to another. This Methylobacterium nodulans (strain LMG 21967 / CNCM I-2342 / ORS 2060) protein is Ribosome-recycling factor.